A 1197-amino-acid chain; its full sequence is Envelopment polyprotein (1197 aa).

A signal peptide spans 1 to 16 (MYVLLTILTSVLVCEA). Topologically, residues 17 to 130 (IIRVSLSSTR…RDAKQIGRKT (114 aa)) are cytoplasmic. An internal signal sequence for glycoprotein N region spans residues 131 to 153 (MAGIAMTVLPALAVFALAPVVFA). The Lumenal portion of the chain corresponds to 154-582 (EDPHLRNRPG…GLINYQCHTA (429 aa)). 12 cysteine pairs are disulfide-bonded: Cys179–Cys188, Cys229–Cys239, Cys250–Cys281, Cys271–Cys284, Cys304–Cys456, Cys322–Cys332, Cys374–Cys434, Cys402–Cys413, Cys420–Cys425, Cys479–Cys482, Cys486–Cys556, and Cys506–Cys511. The chain crosses the membrane as a helical span at residues 583-603 (LSAFVVVFVFSSIAIICLAIL). Residues 604 to 673 (YRVLKCLKIA…APIPRHAPIP (70 aa)) are Cytoplasmic-facing. The tract at residues 608 to 650 (KCLKIAPRKVLNPLMWITAFIRWIYKKMVARVADNINQVNREI) is golgi retention signal. Residues 646–650 (VNREI) are important for correct targeting of the glycoproteins to the Golgi complex but not for heterodimerization. Residues 675 to 690 (YSTYLMLLLIVSYASA) are internal signal sequence for glycoprotein C. 12 disulfide bridges follow: Cys691/Cys731, Cys704/Cys713, Cys756/Cys852, Cys771/Cys965, Cys777/Cys825, Cys783/Cys832, Cys788/Cys814, Cys818/Cys823, Cys934/Cys947, Cys1029/Cys1101, Cys1039/Cys1042, and Cys1049/Cys1083. At 691 to 1159 (CSELIQASSR…MSWFGGPLKT (469 aa)) the chain is on the lumenal side. The tract at residues 777-783 (CHLVGEC) is fusion loop. Residue Asn794 is glycosylated (N-linked (GlcNAc...) asparagine; by host). The tract at residues 819 to 830 (GGWGCGCFNVNP) is fusion loop. An N-linked (GlcNAc...) asparagine; by host glycan is attached at Asn1035. Asn1077 is a glycosylation site (N-linked (GlcNAc...) asparagine; by host). The helical transmembrane segment at 1160–1180 (ILLICLYVALSIGLFFLLIYL) threads the bilayer. Residues 1181–1197 (GGTGLSKMWLAATKKAS) are Cytoplasmic-facing.

It belongs to the phlebovirus envelope glycoprotein family. In terms of assembly, heterodimer with glycoprotein C. Homotrimer (postfusion). Interacts with nucleocapsid protein N and with the polymerase L in order to package them into virus particles. Interacts with host E3 ubiquitin-protein ligase UBR4; this interaction is important for viral RNA production. Interacts with host LRP1; this interaction facilitates virus entry into the host cell. As to quaternary structure, heterodimer with glycoprotein C. In terms of processing, specific enzymatic cleavages in vivo yield mature proteins including NSm protein, Glycoprotein C, and Glycoprotein N. Post-translationally, glycosylated. The glycans can attach to host CD209/DC-SIGN, and may play a role in virus entry into dendritic cells. Palmitoylated.

It is found in the virion membrane. The protein localises to the host Golgi apparatus membrane. The protein resides in the host endoplasmic reticulum membrane. Its subcellular location is the host mitochondrion outer membrane. It localises to the host Golgi apparatus. It is found in the virion. In terms of biological role, structural component of the virion that interacts with glycoprotein C. It shields the hydrophobic fusion loops of the glycoprotein C, preventing premature fusion. The glycoprotein protrusions are arranged on an icosahedral lattice, with T=12 triangulation. They are able to attach the virion to the host cell receptor CD209/DC-SIGN and to promote fusion of membranes with the late endosome after endocytosis of the virion. Plays a role in the packaging of ribonucleoproteins and polymerase during virus assembly. Its function is as follows. Structural component of the virion that interacts with glycoprotein N. Acts as a class II fusion protein that is activated upon acidification and subsequent repositioning of the glycoprotein N. The glycoprotein protrusions are arranged on an icosahedral lattice, with T=12 triangulation. They are able to attach the virion to the host cell receptor CD209/DC-SIGN and to promote fusion of membranes with the late endosome after endocytosis of the virion. Functionally, plays a role in the inhibition of virus-induced apoptosis. Plays a role for virus dissemination in vertebrates. Plays a role for virus dissemination in mosquitoes. May act as a structural virion protein in insects. The polypeptide is Envelopment polyprotein (GP) (Rift valley fever virus (strain ZH-548 M12) (RVFV)).